Reading from the N-terminus, the 199-residue chain is Transgelin-3 (199 aa).

The 113-residue stretch at 24 to 136 folds into the Calponin-homology (CH) domain; the sequence is ADLENKLVDW…RTLMALGSVA (113 aa). Ser163 is subject to Phosphoserine. The Calponin-like repeat unit spans residues 174–199; sequence IGLQMGSNKGASQAGMTGYGMPRQIM. A compositionally biased stretch (polar residues) spans 176–188; sequence LQMGSNKGASQAG. The tract at residues 176 to 199 is disordered; it reads LQMGSNKGASQAGMTGYGMPRQIM.

This sequence belongs to the calponin family. Widely expressed in the brain. Expression is increased in the superior frontal cortex of alcoholics, but not in the motor cortex or cerebellum.

This is Transgelin-3 (TAGLN3) from Homo sapiens (Human).